The sequence spans 616 residues: Bifunctional 2-aminoethylphosphonate cytidylyltransferase/aminotransferase (616 aa).

Positions 1–240 are 2-aminoethylphosphonate cytidylyltransferase; it reads MIKQAVILAG…VKNIYPHIVE (240 aa). Leucine 8, glycine 10, glycine 11, lysine 25, threonine 83, threonine 88, glutamate 104, and serine 105 together coordinate CMP-(2-aminoethyl)phosphonate. 2 residues coordinate Mg(2+): aspartate 106 and aspartate 136. Positions 136, 153, and 196 each coordinate CMP-(2-aminoethyl)phosphonate. Mg(2+)-binding residues include glutamate 220 and aspartate 222. The segment at 250-616 is 2-aminoethylphosphonate aminotransferase; sequence EVLLNPGPAT…EYMNGIGVGV (367 aa). Pyridoxal 5'-phosphate is bound by residues serine 313, glycine 314, threonine 315, threonine 390, lysine 441, and threonine 490.

In the N-terminal section; belongs to the LicC/PntC cytidylyltransferase family. The protein in the C-terminal section; belongs to the class-V pyridoxal-phosphate-dependent aminotransferase family. PhnW subfamily. In terms of assembly, homodimer. Mg(2+) is required as a cofactor. It depends on Zn(2+) as a cofactor. Pyridoxal 5'-phosphate serves as cofactor.

The catalysed reaction is (2-aminoethyl)phosphonate + CTP = CMP-(2-aminoethyl)phosphonate + diphosphate. The enzyme catalyses (2-aminoethyl)phosphonate + pyruvate = phosphonoacetaldehyde + L-alanine. The protein operates within phosphorus metabolism; phosphonate biosynthesis. Cytidylyltransferase activity is inhibited in the presence of EDTA and is restored by the addition of Mg(2+) or Zn(2+). Bifunctional transferase involved in the biosynthesis of cell-surface phosphonates. The aminotransferase region catalyzes the transformation of phosphonoacetaldehyde (PnAA) to 2-aminoethylphosphonate (AEP). The cytidylyltransferase region catalyzes the activation of 2-aminoethylphosphonate (AEP) to CMP-2-aminoethylphosphonate (CMP-AEP). Cannot use phosphocholine. Exhibits strong activity towards CTP, limited activity towards ATP and no activity with GTP. The chain is Bifunctional 2-aminoethylphosphonate cytidylyltransferase/aminotransferase from Treponema denticola (strain ATCC 35405 / DSM 14222 / CIP 103919 / JCM 8153 / KCTC 15104).